The primary structure comprises 209 residues: ATP-dependent dethiobiotin synthetase BioD (209 aa).

13–18 provides a ligand contact to ATP; the sequence is DVGKTV. Thr17 lines the Mg(2+) pocket. Lys33 is a catalytic residue. Residue Glu100 coordinates Mg(2+). ATP is bound by residues 100-103 and 184-186; these read EGAG and PRL.

It belongs to the dethiobiotin synthetase family. Homodimer. The cofactor is Mg(2+).

Its subcellular location is the cytoplasm. It carries out the reaction (7R,8S)-7,8-diammoniononanoate + CO2 + ATP = (4R,5S)-dethiobiotin + ADP + phosphate + 3 H(+). Its pathway is cofactor biosynthesis; biotin biosynthesis; biotin from 7,8-diaminononanoate: step 1/2. Its function is as follows. Catalyzes a mechanistically unusual reaction, the ATP-dependent insertion of CO2 between the N7 and N8 nitrogen atoms of 7,8-diaminopelargonic acid (DAPA, also called 7,8-diammoniononanoate) to form a ureido ring. This chain is ATP-dependent dethiobiotin synthetase BioD, found in Rhizorhabdus wittichii (strain DSM 6014 / CCUG 31198 / JCM 15750 / NBRC 105917 / EY 4224 / RW1) (Sphingomonas wittichii).